We begin with the raw amino-acid sequence, 174 residues long: Protein GrpE (174 aa).

The protein belongs to the GrpE family. In terms of assembly, homodimer.

Its subcellular location is the cytoplasm. Functionally, participates actively in the response to hyperosmotic and heat shock by preventing the aggregation of stress-denatured proteins, in association with DnaK and GrpE. It is the nucleotide exchange factor for DnaK and may function as a thermosensor. Unfolded proteins bind initially to DnaJ; upon interaction with the DnaJ-bound protein, DnaK hydrolyzes its bound ATP, resulting in the formation of a stable complex. GrpE releases ADP from DnaK; ATP binding to DnaK triggers the release of the substrate protein, thus completing the reaction cycle. Several rounds of ATP-dependent interactions between DnaJ, DnaK and GrpE are required for fully efficient folding. In Methanothermobacter thermautotrophicus (strain ATCC 29096 / DSM 1053 / JCM 10044 / NBRC 100330 / Delta H) (Methanobacterium thermoautotrophicum), this protein is Protein GrpE.